The following is a 402-amino-acid chain: Multidrug resistance protein MdtH (402 aa).

Residues 1–12 (MSRVSQARNLGK) are Cytoplasmic-facing. The chain crosses the membrane as a helical span at residues 13-33 (YFLLIDNMLVVLGFFVVFPLI). The Periplasmic segment spans residues 34-98 (SIRFVDQMGW…GFATMGIAHE (65 aa)). A helical transmembrane segment spans residues 99 to 116 (PWLLWFSCFLSGLGGTLF). The Cytoplasmic portion of the chain corresponds to 117 to 138 (DPPRSALVVKLIRPEQRGRFFS). The chain crosses the membrane as a helical span at residues 139–159 (LLMMQDSAGAVIGALLGSWLL). Over 160 to 164 (QYDFR) the chain is Periplasmic. A helical membrane pass occupies residues 165 to 185 (LVCATGAILFILCALFNAWLL). At 186–213 (PAWKLSTARTPVREGMRRVMSNKRFVTY) the chain is on the cytoplasmic side. A helical transmembrane segment spans residues 214 to 234 (VLTLAGYYMLAVQVMLMLPIM). The Periplasmic segment spans residues 235–243 (VNDIAGSPA). A helical membrane pass occupies residues 244 to 264 (AVKWMYAIEACLSLTLLYPIA). Over 265 to 276 (RWSEKRFRLEHR) the chain is Cytoplasmic. A helical transmembrane segment spans residues 277–297 (LMAGLLVMSLSMLPIGMVGNL). Topologically, residues 298–299 (QQ) are periplasmic. Residues 300–320 (LFTLICAFYIGSVIAEPARET) form a helical membrane-spanning segment. At 321–339 (LSASPADARARGSYMGFSR) the chain is on the cytoplasmic side. Residues 340 to 360 (LGLAIGGAISYIGGGWLFDMG) form a helical membrane-spanning segment. Residues 361-367 (KALAQPE) lie on the Periplasmic side of the membrane. Residues 368–388 (LPWMMLGIIGFITFLALGWQF) traverse the membrane as a helical segment. Residues 389–402 (SHKRTPRRMLEPGA) are Cytoplasmic-facing.

It belongs to the major facilitator superfamily. DHA1 family. MdtH (TC 2.A.1.2.21) subfamily.

Its subcellular location is the cell inner membrane. This Salmonella typhi protein is Multidrug resistance protein MdtH.